A 283-amino-acid chain; its full sequence is (+)-borneol dehydrogenase 2 (283 aa).

NAD(+) contacts are provided by residues 27–33 (GGSSGIG), D51, 76–77 (DV), and 103–105 (NAG). S157 acts as the Proton donor in catalysis. Y170, K174, and T205 together coordinate NAD(+). Residue Y170 is the Proton acceptor of the active site. K174 acts as the Proton donor/acceptor in catalysis.

Belongs to the short-chain dehydrogenases/reductases (SDR) family.

It catalyses the reaction (1R,2S,4R)-borneol + NAD(+) = (1R,4R)-camphor + NADH + H(+). Involved in the biosynthesis of monoterpene natural products related to camphor. Catalayzes the oxidation of (+)-borneol to (+)-camphor. Shows absolute selectivity towards (+)-borneol. Catalyzes the oxidation of (+)-isoborneol to (-)-camphor. Shows absolute selectivity towards (+)-isoborneol. In Salvia officinalis (Sage), this protein is (+)-borneol dehydrogenase 2.